The sequence spans 468 residues: Protein maelstrom 2 (468 aa).

Residues 2 to 69 (PPKKHSGFMM…LTRVKKERLN (68 aa)) constitute a DNA-binding region (HMG box). A disordered region spans residues 374 to 393 (KEDSPTVLSPASSRRSLASS). Low complexity predominate over residues 381-393 (LSPASSRRSLASS).

This sequence belongs to the maelstrom family.

It localises to the cytoplasm. It is found in the nucleus. In terms of biological role, involved both in the piRNA and miRNA metabolic processes. As a component of the meiotic nuage, plays a central role during oogenesis by repressing transposable elements and preventing their mobilization, which is essential for the germline integrity. Repression of transposable elements is mediated via the piRNA metabolic process, which mediates the repression of transposable elements during meiosis by forming complexes composed of piRNAs and Piwi proteins and governs the repression of transposons. As a nuclear component, it is required for proper differentiation in the germline stem cell (GSC) lineage by repressing microRNA-7 (miR-7), thereby acting as an indirect regulator of bag-of-marbles (Bam). Acts by binding to the promoter of miR-7 gene and repressing its expression; miR-7 repression alleviates the Bam repression by miR-7, thereby allowing differentiation in the germline stem cell (GSC) lineage. The chain is Protein maelstrom 2 (mael2) from Drosophila ananassae (Fruit fly).